The sequence spans 349 residues: Transcription elongation factor A protein 3 (349 aa).

Residues E5–P82 enclose the TFIIS N-terminal domain. The tract at residues D80–T170 is disordered. Basic and acidic residues predominate over residues K101 to P110. A Phosphoserine modification is found at S115. The segment covering R121–D133 has biased composition (basic and acidic residues). 2 stretches are compositionally biased toward low complexity: residues S134–R144 and P160–T170. S141 carries the post-translational modification Phosphoserine. The TFIIS central domain occupies V188–T304. Residues D307–K347 form a TFIIS-type zinc finger. The Zn(2+) site is built by C311, C314, C339, and C342.

Belongs to the TFS-II family.

The protein localises to the nucleus. Its function is as follows. Necessary for efficient RNA polymerase II transcription elongation past template-encoded arresting sites. The arresting sites in DNA have the property of trapping a certain fraction of elongating RNA polymerases that pass through, resulting in locked ternary complexes. Cleavage of the nascent transcript by S-II allows the resumption of elongation from the new 3'-terminus. In Bos taurus (Bovine), this protein is Transcription elongation factor A protein 3 (TCEA3).